Here is a 475-residue protein sequence, read N- to C-terminus: Aspartyl/glutamyl-tRNA(Asn/Gln) amidotransferase subunit B (475 aa).

Belongs to the GatB/GatE family. GatB subfamily. As to quaternary structure, heterotrimer of A, B and C subunits.

It carries out the reaction L-glutamyl-tRNA(Gln) + L-glutamine + ATP + H2O = L-glutaminyl-tRNA(Gln) + L-glutamate + ADP + phosphate + H(+). The catalysed reaction is L-aspartyl-tRNA(Asn) + L-glutamine + ATP + H2O = L-asparaginyl-tRNA(Asn) + L-glutamate + ADP + phosphate + 2 H(+). Allows the formation of correctly charged Asn-tRNA(Asn) or Gln-tRNA(Gln) through the transamidation of misacylated Asp-tRNA(Asn) or Glu-tRNA(Gln) in organisms which lack either or both of asparaginyl-tRNA or glutaminyl-tRNA synthetases. The reaction takes place in the presence of glutamine and ATP through an activated phospho-Asp-tRNA(Asn) or phospho-Glu-tRNA(Gln). The polypeptide is Aspartyl/glutamyl-tRNA(Asn/Gln) amidotransferase subunit B (Chlorobium luteolum (strain DSM 273 / BCRC 81028 / 2530) (Pelodictyon luteolum)).